The primary structure comprises 508 residues: Maturase K (508 aa).

Belongs to the intron maturase 2 family. MatK subfamily.

Its subcellular location is the plastid. It localises to the chloroplast. Usually encoded in the trnK tRNA gene intron. Probably assists in splicing its own and other chloroplast group II introns. This chain is Maturase K, found in Antirrhinum majus (Garden snapdragon).